Here is a 312-residue protein sequence, read N- to C-terminus: Regulation of nuclear pre-mRNA domain-containing protein 1A (312 aa).

An N-acetylserine modification is found at Ser-2. The region spanning 2–133 is the CID domain; it reads SAFSEAALEK…QLKQALYGDK (132 aa). Phosphoserine occurs at positions 153, 156, and 285. Residues 244-286 are a coiled coil; it reads LADFLRCQKEALAEKEHKLEEYKRKLARVSLVRKELRSRIQSL.

Belongs to the UPF0400 (RTT103) family. May form a heterodimer with RPRD1B. Associates with the RNA polymerase II subunit POLR2A (via CTD phosphorylated at 'Ser-2' and 'Ser-7' of the heptad repeats).

It localises to the nucleus. Its function is as follows. Interacts with phosphorylated C-terminal heptapeptide repeat domain (CTD) of the largest RNA polymerase II subunit POLR2A, and participates in dephosphorylation of the CTD by RPAP2. May act as a negative regulator of cyclin-D1 (CCND1) and cyclin-E (CCNE1) in the cell cycle. This Pongo abelii (Sumatran orangutan) protein is Regulation of nuclear pre-mRNA domain-containing protein 1A (RPRD1A).